The sequence spans 295 residues: GTPase Era (295 aa).

An Era-type G domain is found at 7–176 (KTVSVCIIGR…ITSKAKIAPW (170 aa)). Residues 15–22 (GRPNSGKS) form a G1 region. Residue 15–22 (GRPNSGKS) participates in GTP binding. The tract at residues 41–45 (QTTRS) is G2. The segment at 62–65 (DTPG) is G3. GTP is bound by residues 62-66 (DTPGI) and 124-127 (NKID). The segment at 124 to 127 (NKID) is G4. The segment at 152-154 (ISA) is G5. One can recognise a KH type-2 domain in the interval 204 to 281 (LQQELPYKLT…HLFLFVKVRE (78 aa)).

It belongs to the TRAFAC class TrmE-Era-EngA-EngB-Septin-like GTPase superfamily. Era GTPase family. In terms of assembly, monomer.

The protein localises to the cytoplasm. The protein resides in the cell inner membrane. Functionally, an essential GTPase that binds both GDP and GTP, with rapid nucleotide exchange. Plays a role in 16S rRNA processing and 30S ribosomal subunit biogenesis and possibly also in cell cycle regulation and energy metabolism. The chain is GTPase Era from Rickettsia bellii (strain OSU 85-389).